The following is a 320-amino-acid chain: Fructose-1,6-bisphosphatase class 1 (320 aa).

Mg(2+)-binding residues include Glu84, Asp103, Leu105, and Asp106. Residues 106-109 (DGSS), Asn196, and Lys262 each bind substrate. Glu268 lines the Mg(2+) pocket.

This sequence belongs to the FBPase class 1 family. In terms of assembly, homotetramer. The cofactor is Mg(2+).

The protein localises to the cytoplasm. It catalyses the reaction beta-D-fructose 1,6-bisphosphate + H2O = beta-D-fructose 6-phosphate + phosphate. It functions in the pathway carbohydrate biosynthesis; gluconeogenesis. This chain is Fructose-1,6-bisphosphatase class 1, found in Shewanella amazonensis (strain ATCC BAA-1098 / SB2B).